A 591-amino-acid polypeptide reads, in one-letter code: L-fucose isomerase (591 aa).

Residues glutamate 337 and aspartate 361 each act as proton acceptor in the active site. Mn(2+) contacts are provided by glutamate 337, aspartate 361, and histidine 528.

This sequence belongs to the L-fucose isomerase family. Homohexamer. It depends on Mn(2+) as a cofactor.

The protein resides in the cytoplasm. The catalysed reaction is L-fucose = L-fuculose. It participates in carbohydrate degradation; L-fucose degradation; L-lactaldehyde and glycerone phosphate from L-fucose: step 1/3. Its function is as follows. Converts the aldose L-fucose into the corresponding ketose L-fuculose. In Klebsiella pneumoniae (strain 342), this protein is L-fucose isomerase.